The sequence spans 67 residues: Small ribosomal subunit protein eS17 (67 aa).

It belongs to the eukaryotic ribosomal protein eS17 family.

The polypeptide is Small ribosomal subunit protein eS17 (Thermococcus onnurineus (strain NA1)).